The following is a 424-amino-acid chain: 3-isopropylmalate dehydratase large subunit 1 (424 aa).

[4Fe-4S] cluster-binding residues include Cys303, Cys363, and Cys366.

Belongs to the aconitase/IPM isomerase family. LeuC type 2 subfamily. As to quaternary structure, heterodimer of LeuC and LeuD. It depends on [4Fe-4S] cluster as a cofactor.

It catalyses the reaction (2R,3S)-3-isopropylmalate = (2S)-2-isopropylmalate. It functions in the pathway amino-acid biosynthesis; L-leucine biosynthesis; L-leucine from 3-methyl-2-oxobutanoate: step 2/4. Catalyzes the isomerization between 2-isopropylmalate and 3-isopropylmalate, via the formation of 2-isopropylmaleate. The sequence is that of 3-isopropylmalate dehydratase large subunit 1 from Pyrococcus furiosus (strain ATCC 43587 / DSM 3638 / JCM 8422 / Vc1).